Consider the following 155-residue polypeptide: 6,7-dimethyl-8-ribityllumazine synthase (155 aa).

Residues Trp-23, Ala-57 to Glu-59, and Cys-81 to Ile-83 contribute to the 5-amino-6-(D-ribitylamino)uracil site. Position 86 to 87 (Asp-86 to Thr-87) interacts with (2S)-2-hydroxy-3-oxobutyl phosphate. His-89 serves as the catalytic Proton donor. Asn-114 serves as a coordination point for 5-amino-6-(D-ribitylamino)uracil. Residue Arg-128 coordinates (2S)-2-hydroxy-3-oxobutyl phosphate.

Belongs to the DMRL synthase family. As to quaternary structure, forms an icosahedral capsid composed of 60 subunits, arranged as a dodecamer of pentamers.

The enzyme catalyses (2S)-2-hydroxy-3-oxobutyl phosphate + 5-amino-6-(D-ribitylamino)uracil = 6,7-dimethyl-8-(1-D-ribityl)lumazine + phosphate + 2 H2O + H(+). Its pathway is cofactor biosynthesis; riboflavin biosynthesis; riboflavin from 2-hydroxy-3-oxobutyl phosphate and 5-amino-6-(D-ribitylamino)uracil: step 1/2. Its function is as follows. Catalyzes the formation of 6,7-dimethyl-8-ribityllumazine by condensation of 5-amino-6-(D-ribitylamino)uracil with 3,4-dihydroxy-2-butanone 4-phosphate. This is the penultimate step in the biosynthesis of riboflavin. The protein is 6,7-dimethyl-8-ribityllumazine synthase of Stenotrophomonas maltophilia (strain R551-3).